Consider the following 1241-residue polypeptide: Putative ABC transporter B family member 8 (1241 aa).

The chain crosses the membrane as a helical span at residues 24-44 (FADWIDIVLMVLGSVGAIGDG). One can recognise an ABC transmembrane type-1 1 domain in the interval 33–323 (MVLGSVGAIG…ALTEIRYFSE (291 aa)). N48 carries N-linked (GlcNAc...) asparagine glycosylation. Transmembrane regions (helical) follow at residues 82 to 102 (LYFV…GYCW), 157 to 177 (VPIF…SAYF), 183 to 203 (VVAI…GKYL), 263 to 283 (GLAV…AWYG), and 297 to 317 (IYAA…ALTE). The ABC transporter 1 domain occupies 360-596 (VEFERVTLVY…NNHYAKLVKL (237 aa)). Position 395–402 (395–402 (GASGSGKS)) interacts with ATP. N571, N632, and N648 each carry an N-linked (GlcNAc...) asparagine glycan. Positions 676–964 (SLVGCISATT…AGSMTSDLAK (289 aa)) constitute an ABC transmembrane type-1 2 domain. 2 consecutive transmembrane segments (helical) span residues 686–706 (FGAI…AFFA) and 716–736 (IHIY…LNLL). N773 is a glycosylation site (N-linked (GlcNAc...) asparagine). Helical transmembrane passes span 797–815 (ISLL…IIGL) and 821–838 (LALV…CFYT). A glycan (N-linked (GlcNAc...) asparagine) is linked at N855. Transmembrane regions (helical) follow at residues 899 to 919 (AWLA…TWAL) and 933 to 953 (ISAG…KVIA). The region spanning 998–1236 (IELKNIDFSY…GGQFSRLAHA (239 aa)) is the ABC transporter 2 domain. An ATP-binding site is contributed by 1033-1040 (GTSGCGKS). Residue N1187 is glycosylated (N-linked (GlcNAc...) asparagine).

Belongs to the ABC transporter superfamily. ABCB family. Multidrug resistance exporter (TC 3.A.1.201) subfamily.

The protein resides in the membrane. The chain is Putative ABC transporter B family member 8 (ABCB8) from Arabidopsis thaliana (Mouse-ear cress).